A 292-amino-acid chain; its full sequence is Ribosomal protein L11 methyltransferase (292 aa).

S-adenosyl-L-methionine-binding residues include Thr136, Gly159, Asp181, and Asn228.

The protein belongs to the methyltransferase superfamily. PrmA family.

It localises to the cytoplasm. It carries out the reaction L-lysyl-[protein] + 3 S-adenosyl-L-methionine = N(6),N(6),N(6)-trimethyl-L-lysyl-[protein] + 3 S-adenosyl-L-homocysteine + 3 H(+). In terms of biological role, methylates ribosomal protein L11. The protein is Ribosomal protein L11 methyltransferase of Agrobacterium fabrum (strain C58 / ATCC 33970) (Agrobacterium tumefaciens (strain C58)).